The primary structure comprises 384 residues: S-adenosylmethionine synthase (384 aa).

H15 lines the ATP pocket. D17 is a binding site for Mg(2+). Residue E43 coordinates K(+). The L-methionine site is built by E56 and Q99. A flexible loop region spans residues 99–109 (QSPDINQGVDR). Residues 164-166 (DAK), 230-231 (RF), D239, 245-246 (RK), A262, and K266 contribute to the ATP site. D239 lines the L-methionine pocket. K270 is a binding site for L-methionine.

The protein belongs to the AdoMet synthase family. As to quaternary structure, homotetramer; dimer of dimers. Mg(2+) is required as a cofactor. The cofactor is K(+).

It localises to the cytoplasm. The enzyme catalyses L-methionine + ATP + H2O = S-adenosyl-L-methionine + phosphate + diphosphate. Its pathway is amino-acid biosynthesis; S-adenosyl-L-methionine biosynthesis; S-adenosyl-L-methionine from L-methionine: step 1/1. In terms of biological role, catalyzes the formation of S-adenosylmethionine (AdoMet) from methionine and ATP. The overall synthetic reaction is composed of two sequential steps, AdoMet formation and the subsequent tripolyphosphate hydrolysis which occurs prior to release of AdoMet from the enzyme. This chain is S-adenosylmethionine synthase, found in Edwardsiella ictaluri (strain 93-146).